The following is a 393-amino-acid chain: NAD(P)H-quinone oxidoreductase subunit H, chloroplastic (393 aa).

The protein belongs to the complex I 49 kDa subunit family. In terms of assembly, NDH is composed of at least 16 different subunits, 5 of which are encoded in the nucleus.

The protein resides in the plastid. It localises to the chloroplast thylakoid membrane. The enzyme catalyses a plastoquinone + NADH + (n+1) H(+)(in) = a plastoquinol + NAD(+) + n H(+)(out). It carries out the reaction a plastoquinone + NADPH + (n+1) H(+)(in) = a plastoquinol + NADP(+) + n H(+)(out). NDH shuttles electrons from NAD(P)H:plastoquinone, via FMN and iron-sulfur (Fe-S) centers, to quinones in the photosynthetic chain and possibly in a chloroplast respiratory chain. The immediate electron acceptor for the enzyme in this species is believed to be plastoquinone. Couples the redox reaction to proton translocation, and thus conserves the redox energy in a proton gradient. This Panax ginseng (Korean ginseng) protein is NAD(P)H-quinone oxidoreductase subunit H, chloroplastic.